The primary structure comprises 363 residues: Protein RecA (363 aa).

79–86 provides a ligand contact to ATP; sequence GPESSGKT.

The protein belongs to the RecA family.

The protein resides in the cytoplasm. Can catalyze the hydrolysis of ATP in the presence of single-stranded DNA, the ATP-dependent uptake of single-stranded DNA by duplex DNA, and the ATP-dependent hybridization of homologous single-stranded DNAs. It interacts with LexA causing its activation and leading to its autocatalytic cleavage. The polypeptide is Protein RecA (Methylobacterium radiotolerans (strain ATCC 27329 / DSM 1819 / JCM 2831 / NBRC 15690 / NCIMB 10815 / 0-1)).